The sequence spans 1410 residues: MKDLLNLLKNQGPSDEFDGIRIGLASPDMIRSWSYGEVKKPETINYRTFKPEREGLFCAKVFGPVKDYECLCGKYKRMKHRGIICEKCGVEVTLAKVRRDRMAHIELASPVAHIWFLKSLPSRIGLLLDMTLRSIERVLYFESYVVTDPGMTTLEKGQLLTDEQYFEAMEEFGDEFEAKMGAEAIQQLMKDIELEREAQEIREQIPNTNSETKIKKLSKRLKLLEAFIQSGNKPEWMVLEALPVLPPDLRPLVPLDGGRFATSDLNDLYRRVINRNNRLKRLLDLNAPDIIVRNEKRMLQESVDALLDNGRRGRAITGSNKRPLKSLADMIKGKQGRFRQNLLGKRVDYSGRSVIVTGPTLRLHQCGLPKKMALELFKPFIFSKLELRGLATTIKAAKKMVEREEPVVWDILDEVIREHPVLLNRAPTLHRLGIQAFEPVLIEGKAIQLHPLVCAAYNADFDGDQMAVHVPLTLEAQLEARALMMSTNNILSPASGEPIIVPSQDVVLGLYWMTRERVNDKGEGMIFSDIKEVSRAFYSKQVGLQARIKVRIDETIMEESGESESSYRMVDTTVGRMLLWEIVPKGIPFEMINKPMVKKAISAVINFCYRIVGLKATVIFADQLMYMGYDFSTKSGSSIGVNDFEIPEAKAGMIERADAEVKEIEAQYASGLVAQGEKYNKVIDIWSRANDLVAKSMMEGISKETVKNKQGEDEEQASFNSVFMYADSGARGSPAQIRQLAGMRGLMARPDGSIIETPITANFREGLNVLQYFISTHGARKGLADTALKTANSGYLTRRLVDVAQDVVITEQDCGTDEGLSMTPVIEGGDVIESLGDRILGRVVARDVIRPNSDEILVPAGTMIDEKWVERIESMGIDEVTVRSAISCDAVFGICAQCYGRDLARGHRANVGEAIGVIAAQSIGEPGTQLTMRTFHIGGAASRASAADSVEVKQEGTVRLHNIKVVARESGELIAVSRSGELALADAAGRERERYKIPYGAVITVKEGEQVKGGSIIAKWDPHTHPIVTEVAGRVVLAGMEDGLSIRKQTDELTGLTTIEILDPSERPSAGKDLKPAVTLVDENGNELKLANSEQPAHYMLPGKSIFSLKNGDTVGVGDIIARIPQEGSKTRDITGGLPRVADLFEARKPKEPSILAEISGTVSFGKETKGKRRLVITPPNGAVLEDGSTHYEVLIPKHRHLTVFEGETVAKGEVVSDGPSNPHDILRLKGVEALANYITNEIQDVYRLQGVKINDKHVEVIVRQMLRKVEITGMGDSSFVKGEQVEYIAVLQENEKLRAEGRQPARFERQLLGITKASLATESFISAASFQETTRVLTEASVTGKIDNLRGLKENVVVGRLIPAGTGLAYHAERRRKREDQAGSKAGSDTVSAAEIEAALTEALKSSAS.

The Zn(2+) site is built by Cys70, Cys72, Cys85, and Cys88. The Mg(2+) site is built by Asp460, Asp462, and Asp464. Residues Cys814, Cys888, Cys895, and Cys898 each contribute to the Zn(2+) site.

Belongs to the RNA polymerase beta' chain family. As to quaternary structure, the RNAP catalytic core consists of 2 alpha, 1 beta, 1 beta' and 1 omega subunit. When a sigma factor is associated with the core the holoenzyme is formed, which can initiate transcription. Mg(2+) serves as cofactor. It depends on Zn(2+) as a cofactor.

The catalysed reaction is RNA(n) + a ribonucleoside 5'-triphosphate = RNA(n+1) + diphosphate. DNA-dependent RNA polymerase catalyzes the transcription of DNA into RNA using the four ribonucleoside triphosphates as substrates. The protein is DNA-directed RNA polymerase subunit beta' of Saccharophagus degradans (strain 2-40 / ATCC 43961 / DSM 17024).